The chain runs to 330 residues: Reaction center protein M chain (330 aa).

The next 3 membrane-spanning stretches (helical) occupy residues 57 to 83 (GWTS…AQVG), 115 to 144 (GGWY…EQHK), and 147 to 172 (KHIF…ILMG). H185 and H205 together coordinate (7R,8Z)-bacteriochlorophyll b. The chain crosses the membrane as a helical span at residues 202-230 (NPFHCLSIVFLYGSVLLFCMHGGTILAVT). 2 residues coordinate Fe cation: H222 and E237. W255 is an a ubiquinone binding site. A helical membrane pass occupies residues 264-290 (TMEGIHRWAWWFAVLTPITGGIGILLT). H269 lines the Fe cation pocket.

It belongs to the reaction center PufL/M/PsbA/D family. Reaction center is composed of four bacteriochlorophylls, two bacteriopheophytins, two ubiquinones, one iron, and two highly hydrophobic polypeptide chains (designated L and M).

Its subcellular location is the cellular chromatophore membrane. Functionally, the reaction center is a membrane-bound complex that mediates the initial photochemical event in the electron transfer process of photosynthesis. The chain is Reaction center protein M chain (pufM) from Roseobacter denitrificans (strain ATCC 33942 / OCh 114) (Erythrobacter sp. (strain OCh 114)).